A 215-amino-acid chain; its full sequence is Large ribosomal subunit protein uL4 (215 aa).

The tract at residues 51-88 is disordered; the sequence is KGMGEVSGTTKKPYRQKGTGNARQGSLRAPQFRTGGAV.

This sequence belongs to the universal ribosomal protein uL4 family. As to quaternary structure, part of the 50S ribosomal subunit.

Its function is as follows. One of the primary rRNA binding proteins, this protein initially binds near the 5'-end of the 23S rRNA. It is important during the early stages of 50S assembly. It makes multiple contacts with different domains of the 23S rRNA in the assembled 50S subunit and ribosome. Forms part of the polypeptide exit tunnel. This Granulibacter bethesdensis (strain ATCC BAA-1260 / CGDNIH1) protein is Large ribosomal subunit protein uL4.